The chain runs to 573 residues: Putative 15-O-acetyltransferase SAT12 (573 aa).

The interval 1-40 (MLDDDCSPTSSSEMSNASSREASITSRSSSTSGNNSLPED) is disordered. The segment covering 7–36 (SPTSSSEMSNASSREASITSRSSSTSGNNS) has biased composition (low complexity).

The protein belongs to the trichothecene O-acetyltransferase family.

It participates in mycotoxin biosynthesis. Functionally, putative 15-O-acetyltransferase; part of the satratoxin SC2 cluster involved in the biosynthesis of satratoxins, trichothecene mycotoxins that are associated with human food poisonings. Satratoxins are suggested to be made by products of multiple gene clusters (SC1, SC2 and SC3) that encode 21 proteins in all, including polyketide synthases, acetyltransferases, and other enzymes expected to modify the trichothecene skeleton. SC1 encodes 10 proteins, SAT1 to SAT10. The largest are SAT8, which encodes a putative polyketide synthase (PKS) with a conventional non-reducing architecture, and SAT10, a putative protein containing four ankyrin repeats and thus may be involved in protein scaffolding. The putative short-chain reductase SAT3 may assist the PKS in some capacity. SAT6 contains a secretory lipase domain and acts probably as a trichothecene esterase. SAT5 encodes a putative acetyltransferase, and so, with SAT6, may affect endogenous protection from toxicity. The probable transcription factor SAT9 may regulate the expression of the SC1 cluster. SC2 encodes proteins SAT11 to SAT16, the largest of which encodes the putative reducing PKS SAT13. SAT11 is a cytochrome P450 monooxygenase, while SAT14 and SAT16 are probable acetyltransferases. The SC2 cluster may be regulated by the transcription factor SAT15. SC3 is a small cluster that encodes 5 proteins, SAT17 to SAT21. SAT21 is a putative MFS-type transporter which may have a role in exporting secondary metabolites. The four other proteins putatively encoded in SC3 include the taurine hydroxylase-like protein SAT17, the O-methyltransferase SAT18, the acetyltransferase SAT19, and the Cys6-type zinc finger SAT20, the latter being probably involved in regulation of SC3 expression. This Stachybotrys chartarum (strain CBS 109288 / IBT 7711) (Toxic black mold) protein is Putative 15-O-acetyltransferase SAT12.